The chain runs to 201 residues: Glutathione S-transferase GstA (201 aa).

Positions 1–81 (MKLFYKPGAC…YLADSVPDRQ (81 aa)) constitute a GST N-terminal domain. Glutathione contacts are provided by residues Cys-10, Lys-35, Val-52, 65–66 (EG), Asn-99, and 103–106 (TELH). In terms of domain architecture, GST C-terminal spans 87–201 (NSISRYKTIE…QDALSAEGLK (115 aa)).

The protein belongs to the GST superfamily. Beta family. In terms of assembly, homodimer.

The protein localises to the cytoplasm. The enzyme catalyses RX + glutathione = an S-substituted glutathione + a halide anion + H(+). Conjugation of reduced glutathione to a wide number of exogenous and endogenous hydrophobic electrophiles. This Escherichia coli O157:H7 protein is Glutathione S-transferase GstA (gstA).